Reading from the N-terminus, the 62-residue chain is Large ribosomal subunit protein eL24 (62 aa).

The Zn(2+) site is built by Cys6, Cys9, Cys32, and Cys36. The C4-type zinc-finger motif lies at 6-36 (CSFCEGTIEPGCGKKYVKKDGSVMHFCSSKC).

This sequence belongs to the eukaryotic ribosomal protein eL24 family. As to quaternary structure, part of the 50S ribosomal subunit. Forms a cluster with proteins L3 and L14. The cofactor is Zn(2+).

Functionally, binds to the 23S rRNA. In Methanococcus maripaludis (strain C7 / ATCC BAA-1331), this protein is Large ribosomal subunit protein eL24.